The sequence spans 279 residues: Tumor protein p63-regulated gene 1 protein (279 aa).

The tract at residues 1–49 (MSTIGSFDGFQPVSLKQEEEDQPSENDHLSTKEGNSGKDPGSRRISRQQ) is disordered. Residues 72-259 (VTRPGAIETA…ILIETYTGLM (188 aa)) form the hSac2 domain.

Belongs to the TPRG1 family. In terms of tissue distribution, highly expressed in skin. Also detected at low levels in tongue and esophagus.

The protein resides in the cytoplasm. This Mus musculus (Mouse) protein is Tumor protein p63-regulated gene 1 protein.